We begin with the raw amino-acid sequence, 288 residues long: Scolexin B (288 aa).

A signal peptide spans 1–20; the sequence is MFASKLAVCSALALLAVAHA. The region spanning 21–287 is the Peptidase S1 domain; the sequence is APGGNDIQKI…VRDWIKKVTN (267 aa). Residues 27 to 56 form a disordered region; the sequence is IQKITKAPNVPTKAEGDAASKASAPAIPPK. Residues C72 and C88 are joined by a disulfide bond. Catalysis depends on charge relay system residues H87 and D145. Intrachain disulfides connect C210–C223 and C235–C264. The active-site Charge relay system is S239.

The protein belongs to the peptidase S1 family.

This is Scolexin B from Heliothis virescens (Tobacco budworm moth).